Consider the following 360-residue polypeptide: Protein Wnt-2 (360 aa).

Positions 1–25 are cleaved as a signal peptide; it reads MNAPLAGIWPWLPLLLTWLAPEVSS. 11 disulfide bridges follow: C76–C87, C127–C135, C137–C157, C206–C220, C208–C215, C278–C309, C294–C304, C308–C348, C324–C339, C326–C336, and C331–C332. S212 carries O-palmitoleoyl serine; by PORCN lipidation. An N-linked (GlcNAc...) asparagine glycan is attached at N295.

The protein belongs to the Wnt family. In terms of processing, palmitoleoylation is required for efficient binding to frizzled receptors. Depalmitoleoylation leads to Wnt signaling pathway inhibition.

Its subcellular location is the secreted. The protein resides in the extracellular space. It localises to the extracellular matrix. Its function is as follows. Ligand for members of the frizzled family of seven transmembrane receptors. Functions in the canonical Wnt signaling pathway that results in activation of transcription factors of the TCF/LEF family. Functions as a upstream regulator of FGF10 expression. Plays an important role in embryonic lung development. May contribute to embryonic brain development by regulating the proliferation of dopaminergic precursors and neurons. This Loxodonta africana (African elephant) protein is Protein Wnt-2 (WNT2).